Reading from the N-terminus, the 197-residue chain is Small ribosomal subunit protein uS4B (197 aa).

Residues 88 to 150 (SRLDNMVYRM…SRKTEMFVNN (63 aa)) form the S4 RNA-binding domain.

Belongs to the universal ribosomal protein uS4 family. Part of the 30S ribosomal subunit. Contacts protein S5. The interaction surface between S4 and S5 is involved in control of translational fidelity.

One of the primary rRNA binding proteins, it binds directly to 16S rRNA where it nucleates assembly of the body of the 30S subunit. Functionally, with S5 and S12 plays an important role in translational accuracy. The polypeptide is Small ribosomal subunit protein uS4B (Clostridium perfringens (strain ATCC 13124 / DSM 756 / JCM 1290 / NCIMB 6125 / NCTC 8237 / Type A)).